The primary structure comprises 101 residues: Small ribosomal subunit protein uS14 (101 aa).

The protein belongs to the universal ribosomal protein uS14 family. As to quaternary structure, part of the 30S ribosomal subunit. Contacts proteins S3 and S10.

Binds 16S rRNA, required for the assembly of 30S particles and may also be responsible for determining the conformation of the 16S rRNA at the A site. The chain is Small ribosomal subunit protein uS14 from Buchnera aphidicola subsp. Baizongia pistaciae (strain Bp).